The chain runs to 119 residues: Ribonuclease P protein component (119 aa).

The protein belongs to the RnpA family. Consists of a catalytic RNA component (M1 or rnpB) and a protein subunit.

The catalysed reaction is Endonucleolytic cleavage of RNA, removing 5'-extranucleotides from tRNA precursor.. Its function is as follows. RNaseP catalyzes the removal of the 5'-leader sequence from pre-tRNA to produce the mature 5'-terminus. It can also cleave other RNA substrates such as 4.5S RNA. The protein component plays an auxiliary but essential role in vivo by binding to the 5'-leader sequence and broadening the substrate specificity of the ribozyme. The protein is Ribonuclease P protein component of Aeromonas salmonicida (strain A449).